The chain runs to 135 residues: Large ribosomal subunit protein uL16c (135 aa).

This sequence belongs to the universal ribosomal protein uL16 family. As to quaternary structure, part of the 50S ribosomal subunit.

The protein resides in the plastid. It localises to the chloroplast. The protein is Large ribosomal subunit protein uL16c of Ceratophyllum demersum (Rigid hornwort).